Consider the following 198-residue polypeptide: Cell division protein SepF (198 aa).

Positions 170 to 198 (EVPQPPARPARPASTNPPAWGNETNRMAQ) are disordered. The segment covering 179 to 188 (ARPASTNPPA) has biased composition (low complexity).

Belongs to the SepF family. In terms of assembly, homodimer. Interacts with FtsZ.

It is found in the cytoplasm. Functionally, cell division protein that is part of the divisome complex and is recruited early to the Z-ring. Probably stimulates Z-ring formation, perhaps through the cross-linking of FtsZ protofilaments. Its function overlaps with FtsA. In Nostoc sp. (strain PCC 7120 / SAG 25.82 / UTEX 2576), this protein is Cell division protein SepF.